The following is a 153-amino-acid chain: Large ribosomal subunit protein uL15 (153 aa).

A disordered region spans residues 1–48; that stretch reads MRLNELSPAPGSKKDRKRVGRGDAGRGNYSGRGMKGQKARSGGATRPG.

It belongs to the universal ribosomal protein uL15 family. As to quaternary structure, part of the 50S ribosomal subunit.

In terms of biological role, binds to the 23S rRNA. This Dehalococcoides mccartyi (strain ATCC BAA-2266 / KCTC 15142 / 195) (Dehalococcoides ethenogenes (strain 195)) protein is Large ribosomal subunit protein uL15.